A 121-amino-acid polypeptide reads, in one-letter code: Replication protein A 14 kDa subunit (121 aa).

V2 is subject to N-acetylvaline. Glycyl lysine isopeptide (Lys-Gly) (interchain with G-Cter in ubiquitin) cross-links involve residues K23, K39, and K88.

The protein belongs to the replication factor A protein 3 family. In terms of assembly, component of the canonical replication protein A complex (RPA), a heterotrimer composed of RPA1, RPA2 and RPA3. Also a component of the aRPA, the alternative replication protein A complex, a trimeric complex similar to the replication protein A complex/RPA but where RPA1 and RPA3 are associated with RPA4 instead of RPA2. Interacts with BRIP1/FANCJ via the RPA1 subunit; following DNA damage they colocalize in foci in the nucleus. Post-translationally, ubiquitinated by RFWD3 at stalled replication forks in response to DNA damage: ubiquitination by RFWD3 does not lead to degradation by the proteasome and promotes removal of the RPA complex from stalled replication forks, promoting homologous recombination.

The protein resides in the nucleus. In terms of biological role, as part of the heterotrimeric replication protein A complex (RPA/RP-A), binds and stabilizes single-stranded DNA intermediates that form during DNA replication or upon DNA stress. It prevents their reannealing and in parallel, recruits and activates different proteins and complexes involved in DNA metabolism. Thereby, it plays an essential role both in DNA replication and the cellular response to DNA damage. In the cellular response to DNA damage, the RPA complex controls DNA repair and DNA damage checkpoint activation. Through recruitment of ATRIP activates the ATR kinase a master regulator of the DNA damage response. It is required for the recruitment of the DNA double-strand break repair factors RAD51 and RAD52 to chromatin, in response to DNA damage. Also recruits to sites of DNA damage proteins like XPA and XPG that are involved in nucleotide excision repair and is required for this mechanism of DNA repair. Also plays a role in base excision repair (BER), probably through interaction with UNG. RPA stimulates 5'-3' helicase activity of BRIP1/FANCJ. Also recruits SMARCAL1/HARP, which is involved in replication fork restart, to sites of DNA damage. May also play a role in telomere maintenance. RPA3 has its own single-stranded DNA-binding activity and may be responsible for polarity of the binding of the complex to DNA. As part of the alternative replication protein A complex, aRPA, binds single-stranded DNA and probably plays a role in DNA repair. Compared to the RPA2-containing, canonical RPA complex, may not support chromosomal DNA replication and cell cycle progression through S-phase. The aRPA may not promote efficient priming by DNA polymerase alpha but could support DNA synthesis by polymerase delta in presence of PCNA and replication factor C (RFC), the dual incision/excision reaction of nucleotide excision repair and RAD51-dependent strand exchange. This chain is Replication protein A 14 kDa subunit (RPA3), found in Homo sapiens (Human).